Consider the following 222-residue polypeptide: UPF0488 protein C8orf33 homolog (222 aa).

The span at 1 to 16 (MAEPGRPAREAPAASS) shows a compositional bias: low complexity. 3 disordered regions span residues 1–103 (MAEP…AEQL), 119–146 (KTQR…TPLP), and 186–210 (VSEA…KTTP). The residue at position 2 (Ala2) is an N-acetylalanine. Basic residues predominate over residues 17-28 (RKTHRAPRRPRP). Arg27 carries the post-translational modification Omega-N-methylarginine. The span at 29-39 (SRSASGASEPP) shows a compositional bias: low complexity. The residue at position 75 (Ser75) is a Phosphoserine. Low complexity predominate over residues 93-103 (PPSAEAQAEQL).

This sequence belongs to the UPF0488 family.

The protein is UPF0488 protein C8orf33 homolog of Mus musculus (Mouse).